The following is a 351-amino-acid chain: Peptide chain release factor 1 (351 aa).

Gln229 carries the post-translational modification N5-methylglutamine.

This sequence belongs to the prokaryotic/mitochondrial release factor family. In terms of processing, methylated by PrmC. Methylation increases the termination efficiency of RF1.

Its subcellular location is the cytoplasm. Functionally, peptide chain release factor 1 directs the termination of translation in response to the peptide chain termination codons UAG and UAA. This Cereibacter sphaeroides (strain KD131 / KCTC 12085) (Rhodobacter sphaeroides) protein is Peptide chain release factor 1.